The primary structure comprises 235 residues: Phosphoribosylaminoimidazole-succinocarboxamide synthase (235 aa).

The protein belongs to the SAICAR synthetase family.

The enzyme catalyses 5-amino-1-(5-phospho-D-ribosyl)imidazole-4-carboxylate + L-aspartate + ATP = (2S)-2-[5-amino-1-(5-phospho-beta-D-ribosyl)imidazole-4-carboxamido]succinate + ADP + phosphate + 2 H(+). The protein operates within purine metabolism; IMP biosynthesis via de novo pathway; 5-amino-1-(5-phospho-D-ribosyl)imidazole-4-carboxamide from 5-amino-1-(5-phospho-D-ribosyl)imidazole-4-carboxylate: step 1/2. The protein is Phosphoribosylaminoimidazole-succinocarboxamide synthase of Streptococcus mutans serotype c (strain ATCC 700610 / UA159).